A 21-amino-acid polypeptide reads, in one-letter code: Apolipophorin 2 (21 aa).

In terms of tissue distribution, expressed in hemolymph.

It is found in the secreted. Constitutes the major component of lipophorin, which mediates transport for various types of lipids in hemolymph. Acts by forming lipoprotein particles that bind lipoproteins and lipids. In Galleria mellonella (Greater wax moth), this protein is Apolipophorin 2.